Consider the following 417-residue polypeptide: Serine hydroxymethyltransferase (417 aa).

Residues L112 and 116–118 each bind (6S)-5,6,7,8-tetrahydrofolate; that span reads GHL. K221 carries the post-translational modification N6-(pyridoxal phosphate)lysine. E247 is a (6S)-5,6,7,8-tetrahydrofolate binding site.

The protein belongs to the SHMT family. As to quaternary structure, homodimer. Pyridoxal 5'-phosphate is required as a cofactor.

The protein resides in the cytoplasm. The enzyme catalyses (6R)-5,10-methylene-5,6,7,8-tetrahydrofolate + glycine + H2O = (6S)-5,6,7,8-tetrahydrofolate + L-serine. It functions in the pathway one-carbon metabolism; tetrahydrofolate interconversion. Its pathway is amino-acid biosynthesis; glycine biosynthesis; glycine from L-serine: step 1/1. Functionally, catalyzes the reversible interconversion of serine and glycine with tetrahydrofolate (THF) serving as the one-carbon carrier. This reaction serves as the major source of one-carbon groups required for the biosynthesis of purines, thymidylate, methionine, and other important biomolecules. Also exhibits THF-independent aldolase activity toward beta-hydroxyamino acids, producing glycine and aldehydes, via a retro-aldol mechanism. This is Serine hydroxymethyltransferase from Borrelia garinii subsp. bavariensis (strain ATCC BAA-2496 / DSM 23469 / PBi) (Borreliella bavariensis).